The chain runs to 267 residues: MNPIVPAVERPIEDVQAKADERQIAINKVGIKDIRHPVRVSDRNGGEQHTVANFNMYVDLPHHFKGTHMSRFVEILNQHEHEITVRSFREMLREMNHRLQAESGHIEMVFPYFVTKQAPVSKVQSLMDYQVTFIGEIKGDKPQITVKVVVPVTSLCPCSKQISDYGAHNQRSHVTVAVRIEGFIWLEDIIDLVEEEASCEIYGLLKRPDEKYVTERAYDNPKFVEDMVRDVAARLNQDDRVSAYRVESENFESIHNHSAYAMIEREK.

The protein belongs to the GTP cyclohydrolase IV family.

It carries out the reaction GTP + H2O = 7,8-dihydroneopterin 3'-triphosphate + formate + H(+). It functions in the pathway cofactor biosynthesis; 7,8-dihydroneopterin triphosphate biosynthesis; 7,8-dihydroneopterin triphosphate from GTP: step 1/1. Converts GTP to 7,8-dihydroneopterin triphosphate. The polypeptide is GTP cyclohydrolase FolE2 (Nitrosococcus oceani (strain ATCC 19707 / BCRC 17464 / JCM 30415 / NCIMB 11848 / C-107)).